Here is a 570-residue protein sequence, read N- to C-terminus: Nucleoprotein (570 aa).

Positions 54–241 are binding site for the cap structure m7GTP; the sequence is MRKDKRNDSD…IDVSKSSINV (188 aa). The segment at 342-361 is disordered; sequence IDLSQNKQMSPAKPKGAGHG. Asp390 and Glu392 together coordinate Mn(2+). Glu400, Cys507, His510, and Cys530 together coordinate Zn(2+). Asp534 lines the Mn(2+) pocket.

Belongs to the arenaviridae nucleocapsid protein family. As to quaternary structure, homomultimerizes to form the nucleocapsid. Binds to viral genomic RNA. Interacts with glycoprotein G2. Interacts with protein Z; this interaction probably directs the encapsidated genome to budding sites. Interacts with protein L; this interaction does not interfere with Z-L interaction. Interacts with host IKBKE (via Protein kinase domain); the interaction inhibits IKBKE kinase activity.

The protein localises to the virion. The protein resides in the host cytoplasm. In terms of biological role, encapsidates the genome, protecting it from nucleases. The encapsidated genomic RNA is termed the nucleocapsid (NC). Serves as template for viral transcription and replication. The increased presence of protein N in host cell does not seem to trigger the switch from transcription to replication as observed in other negative strain RNA viruses. Through the interaction with host IKBKE, strongly inhibits the phosphorylation and nuclear translocation of host IRF3, a protein involved in interferon activation pathway, leading to the inhibition of interferon-beta and IRF3-dependent promoters activation. Also encodes a functional 3'-5' exoribonuclease that degrades preferentially dsRNA substrates and thereby participates in the suppression of interferon induction. The chain is Nucleoprotein from Praomys (African soft-furred rats).